A 396-amino-acid polypeptide reads, in one-letter code: Flavohemoprotein (396 aa).

Residues 1–136 (MLDNQTIATV…LADIFINREE (136 aa)) enclose the Globin domain. Heme b is bound at residue His85. Active-site charge relay system residues include Tyr95 and Glu135. Residues 147-396 (GGWRGLRPFR…YECFGPHKVI (250 aa)) are reductase. Residues 150-255 (RGLRPFRINR…TAPRGDFFLD (106 aa)) form the FAD-binding FR-type domain. FAD-binding positions include Tyr188 and 204–207 (RQYS). 268–273 (GVGLTP) is an NADP(+) binding site. Residue 389-392 (CFGP) participates in FAD binding.

The protein belongs to the globin family. Two-domain flavohemoproteins subfamily. It in the C-terminal section; belongs to the flavoprotein pyridine nucleotide cytochrome reductase family. Requires heme b as cofactor. It depends on FAD as a cofactor.

The enzyme catalyses 2 nitric oxide + NADPH + 2 O2 = 2 nitrate + NADP(+) + H(+). The catalysed reaction is 2 nitric oxide + NADH + 2 O2 = 2 nitrate + NAD(+) + H(+). Functionally, is involved in NO detoxification in an aerobic process, termed nitric oxide dioxygenase (NOD) reaction that utilizes O(2) and NAD(P)H to convert NO to nitrate, which protects the bacterium from various noxious nitrogen compounds. Therefore, plays a central role in the inducible response to nitrosative stress. This chain is Flavohemoprotein, found in Photorhabdus laumondii subsp. laumondii (strain DSM 15139 / CIP 105565 / TT01) (Photorhabdus luminescens subsp. laumondii).